Here is a 169-residue protein sequence, read N- to C-terminus: Putative tRNA (cytidine(34)-2'-O)-methyltransferase (169 aa).

Residues valine 79, glycine 104, isoleucine 125, and serine 134 each contribute to the S-adenosyl-L-methionine site.

This sequence belongs to the class IV-like SAM-binding methyltransferase superfamily. RNA methyltransferase TrmH family. TrmL subfamily.

It localises to the cytoplasm. It catalyses the reaction cytidine(34) in tRNA + S-adenosyl-L-methionine = 2'-O-methylcytidine(34) in tRNA + S-adenosyl-L-homocysteine + H(+). The enzyme catalyses 5-carboxymethylaminomethyluridine(34) in tRNA(Leu) + S-adenosyl-L-methionine = 5-carboxymethylaminomethyl-2'-O-methyluridine(34) in tRNA(Leu) + S-adenosyl-L-homocysteine + H(+). Its function is as follows. Could methylate the ribose at the nucleotide 34 wobble position in tRNA. In Lactococcus lactis subsp. cremoris (strain MG1363), this protein is Putative tRNA (cytidine(34)-2'-O)-methyltransferase.